A 568-amino-acid polypeptide reads, in one-letter code: Sulfite reductase [NADPH] hemoprotein beta-component (568 aa).

The [4Fe-4S] cluster site is built by Cys426, Cys432, Cys471, and Cys475. Cys475 contacts siroheme.

Belongs to the nitrite and sulfite reductase 4Fe-4S domain family. In terms of assembly, alpha(8)-beta(8). The alpha component is a flavoprotein, the beta component is a hemoprotein. Siroheme is required as a cofactor. [4Fe-4S] cluster serves as cofactor.

The catalysed reaction is hydrogen sulfide + 3 NADP(+) + 3 H2O = sulfite + 3 NADPH + 4 H(+). The protein operates within sulfur metabolism; hydrogen sulfide biosynthesis; hydrogen sulfide from sulfite (NADPH route): step 1/1. Its function is as follows. Component of the sulfite reductase complex that catalyzes the 6-electron reduction of sulfite to sulfide. This is one of several activities required for the biosynthesis of L-cysteine from sulfate. This Xylella fastidiosa (strain M12) protein is Sulfite reductase [NADPH] hemoprotein beta-component.